A 224-amino-acid polypeptide reads, in one-letter code: UPF0173 metal-dependent hydrolase Memar_1421 (224 aa).

This sequence belongs to the UPF0173 family.

The chain is UPF0173 metal-dependent hydrolase Memar_1421 from Methanoculleus marisnigri (strain ATCC 35101 / DSM 1498 / JR1).